The chain runs to 315 residues: Kinetochore protein SPC25 homolog (315 aa).

Position 1 is an N-acetylmethionine (Met-1). Positions 57–91 (TAQSQVELMNLKADLREAEDELVKVLAVKTRKEAR) form a coiled coil. Residues 261 to 315 (APAISFSTDTNMSTPENKRSKVQVNRRQKRGSESPLLAPVSTSATRRSSRFKGKK) are disordered. Polar residues predominate over residues 266–275 (FSTDTNMSTP). Basic residues predominate over residues 280–289 (SKVQVNRRQK).

The protein belongs to the SPC25 family. As to quaternary structure, component of the NDC80 complex, which consists of NDC80, NUF2, SPC24 and SPC25.

The protein localises to the chromosome. It is found in the centromere. Functionally, acts as a component of the essential kinetochore-associated NDC80 complex, which is required for chromosome segregation and spindle checkpoint activity to ensure proper cell division. In Arabidopsis thaliana (Mouse-ear cress), this protein is Kinetochore protein SPC25 homolog.